We begin with the raw amino-acid sequence, 493 residues long: Glutamate--tRNA ligase (493 aa).

The short motif at 10–20 (PSPTGDPHVGT) is the 'HIGH' region element. Cys107, Cys109, Cys134, and His136 together coordinate Zn(2+). Positions 251-255 (KLSKR) match the 'KMSKS' region motif. ATP is bound at residue Lys254.

Belongs to the class-I aminoacyl-tRNA synthetase family. Glutamate--tRNA ligase type 1 subfamily. Monomer. Zn(2+) serves as cofactor.

The protein resides in the cytoplasm. It carries out the reaction tRNA(Glu) + L-glutamate + ATP = L-glutamyl-tRNA(Glu) + AMP + diphosphate. Catalyzes the attachment of glutamate to tRNA(Glu) in a two-step reaction: glutamate is first activated by ATP to form Glu-AMP and then transferred to the acceptor end of tRNA(Glu). The chain is Glutamate--tRNA ligase from Ectopseudomonas mendocina (strain ymp) (Pseudomonas mendocina).